Here is a 322-residue protein sequence, read N- to C-terminus: Pyrroline-5-carboxylate reductase (322 aa).

2 consecutive transmembrane segments (helical) span residues 9 to 29 (YPNV…VGLL) and 117 to 137 (ILIS…LHFW). The segment at 302 to 322 (LSQSAGSHGEDNTTDSKTSRA) is disordered. N-linked (GlcNAc...) asparagine glycosylation is present at Asn313.

It belongs to the pyrroline-5-carboxylate reductase family.

Its subcellular location is the membrane. It carries out the reaction L-proline + NADP(+) = (S)-1-pyrroline-5-carboxylate + NADPH + 2 H(+). The catalysed reaction is L-proline + NAD(+) = (S)-1-pyrroline-5-carboxylate + NADH + 2 H(+). The protein operates within alkaloid biosynthesis. Pyrroline-5-carboxylate reductase; part of the gene cluster that mediates the biosynthesis of paraherquamide, a fungal indole alkaloid that belongs to a family of natural products containing a characteristic bicyclo[2.2.2]diazaoctane core. The first steps in the biosynthesis of paraherquamide is the production of the beta-methyl-proline precursor from L-isoleucine. They require oxidation of a terminally hydroxylated L-isoleucine to the corresponding aldehyde by enzymes which have still to be identified. Spontaneous cyclization and dehydration would yield the 4-methyl pyrolline-5-carboxylic acid, which is then reduced by the pyrroline-5-carboxylate reductase phqD leading to the beta-methyl-proline precursor. The next step of paraherquamide biosynthesis involves coupling of beta-methyl-proline and L-tryptophan by the bimodular NRPS phqB, to produce a monooxopiperazine intermediate. The reductase (R) domain of phqB utilizes NADPH for hydride transfer to reduce the thioester bond of the T domain-tethered linear dipeptide to a hemithioaminal intermediate, which spontaneously cleaves the C-S bond to release the aldehyde product. This compound undergoes spontaneous cyclization and dehydration to give a dienamine which is reverse prenylated at C-2 by the reverse prenyltransferase phqJ. The other prenyltransferase present in the cluster, phqI may be a redundant gene in the pathway. During biosynthetic assembly, the key step to produce the polycyclic core is catalyzed by the bifunctional reductase and intramolecular [4+2] Diels-Alderase, phqE, resulting in formation of the [2.2.2] diazaoctane intermediate preparaherquamide. Following formation of preparaherquamide, an indole 2,3-epoxidation-initiated pinacol-like rearrangement is catalyzed by the phqK FAD-dependent monooxygenase. The prenyltransferase phqA, the cytochrome P450 monooxygenase phqL, and the FAD-linked oxidoreductase phqH (or the cytochrome P450 monooxygenase phqM), are proposed to be involved in the formation of the pyran ring. The FAD-dependent monooxygenase phqK is likely responsible for generation of the spiro-oxindole, and the N-methylation is likely mediated by the phqN methyltransferase leading to the isolable natural product paraherquamide F. However, the order of these biosynthetic steps has still to be determined. In late-stage paraherquamide biosynthesis, the third P450 monooxygenase, phqO, is probably responsible for the C-14 hydroxylation, transforming paraherquamide F to paraherquamide G, and paraherquamide E to the final product paraherquamide A. The expansion from the 6-membered ring pyran (in paraherquamides F and G) to the 7-membered dioxepin ring (in paraherquamides A and E) represents a poorly understood but intriguing process that probably involves the 2-oxoglutarate-dependent dioxygenase phqC. Finally, the remaining members of the paraherquamide cluster, including phqI as well as phqM (or phqH), do not have a clearly prescribed role and appear to be redundant. The protein is Pyrroline-5-carboxylate reductase of Penicillium fellutanum.